The sequence spans 187 residues: Ribosome-recycling factor (187 aa).

This sequence belongs to the RRF family.

The protein localises to the cytoplasm. Functionally, responsible for the release of ribosomes from messenger RNA at the termination of protein biosynthesis. May increase the efficiency of translation by recycling ribosomes from one round of translation to another. The polypeptide is Ribosome-recycling factor (Flavobacterium johnsoniae (strain ATCC 17061 / DSM 2064 / JCM 8514 / BCRC 14874 / CCUG 350202 / NBRC 14942 / NCIMB 11054 / UW101) (Cytophaga johnsonae)).